Consider the following 181-residue polypeptide: MDDLTAQALKDFTARYCDAWHEEHKSWPLSEELYGVPSPCIISTTEDAIYWQPQPFTGEQNVNAVERAFDIVIQPTIHTFYTTQFAGDMHAQFGDIKLTLLQTWSEDDFRRVQENLIGHLVTQKRLKLPPTLFIATLEEELEVISVCNLSGEVCKETLGTRKRTHLASNLAEFLNQLKPLL.

It belongs to the Syd family.

It is found in the cell inner membrane. In terms of biological role, interacts with the SecY protein in vivo. May bind preferentially to an uncomplexed state of SecY, thus functioning either as a chelating agent for excess SecY in the cell or as a regulatory factor that negatively controls the translocase function. The chain is Protein Syd from Escherichia coli O81 (strain ED1a).